Consider the following 264-residue polypeptide: Complement C1q tumor necrosis factor-related protein 6 (264 aa).

An N-terminal signal peptide occupies residues 1-24 (MRVIMGIASLGFLWAVFLLPLVFG). The N-linked (GlcNAc...) asparagine glycan is linked to Asn77. The disordered stretch occupies residues 81 to 125 (LKGDKGDRGPTGTPGKPGKNGTRGDRGSQGVKGDKGQAGSPGSSC). Positions 83–124 (GDKGDRGPTGTPGKPGKNGTRGDRGSQGVKGDKGQAGSPGSS) constitute a Collagen-like domain. The segment covering 90-100 (PTGTPGKPGKN) has biased composition (low complexity). Residues 125–264 (CQTHYSAFSV…SGHLIKAEDN (140 aa)) form the C1q domain.

The protein resides in the secreted. The protein is Complement C1q tumor necrosis factor-related protein 6 (C1qtnf6) of Mus musculus (Mouse).